A 331-amino-acid polypeptide reads, in one-letter code: MAEGGGAEPEEQERRSSRPRPPSARDLQLALAELYEDEMKCKSSKPDRSTATAFKSPRTPPLRLYSGDQEYGGLHIAQPPTGKIVNELFKEAREHGAVPLNEATRSSSDDKAKSFTGGGYRLGSSFYKRSEYIYGENQLQDVQILLRLWSNGFSLDDGELRPYSDPTNAQFLESVKRGEIPLELQRLVHGSQVSLDMEDHQDQEYIKPRLRFKAFSGEGQKLGSLTPEIVSTPSSPEEEDKSILNAAVLIDDSVPTTKIQIRLADGSRLIQRFNSTHRILDVRDFIVQSRPEFATTDFILVTSFPSKELTDESVTLQDADILNTVILQQLK.

Disordered stretches follow at residues 1-26 and 38-63; these read MAEG…SARD and EMKC…PPLR. Position 2 is an N-acetylalanine (Ala-2). The segment covering 38–48 has biased composition (basic and acidic residues); sequence EMKCKSSKPDR. At Ser-56 the chain carries Phosphoserine. At Thr-59 the chain carries Phosphothreonine. Ser-66 is modified (phosphoserine). The SEP domain occupies 141 to 206; sequence DVQILLRLWS…MEDHQDQEYI (66 aa). Phosphoserine occurs at positions 231, 234, and 235. In terms of domain architecture, UBX spans 252 to 329; sequence DSVPTTKIQI…DILNTVILQQ (78 aa).

Belongs to the NSFL1C family. In terms of assembly, interacts with VCP. Does not bind ubiquitin. In terms of tissue distribution, present at high level in brain. Also present in liver, kidney, spleen, testis, lung and heart (at protein level).

Its subcellular location is the nucleus. The protein localises to the cytoplasm. It localises to the cytosol. The protein resides in the endoplasmic reticulum. It is found in the golgi apparatus. Its subcellular location is the cytoskeleton. The protein localises to the microtubule organizing center. It localises to the centrosome. Its function is as follows. Adapter protein required for Golgi and endoplasmic reticulum biogenesis. Involved in Golgi and endoplasmic reticulum maintenance during interphase and in their reassembly at the end of mitosis. The complex formed with VCP has membrane fusion activity; membrane fusion activity requires USO1-GOLGA2 tethering and BET1L. VCPIP1 is also required, but not its deubiquitinating activity. Together with NSFL1C/p47, regulates the centrosomal levels of kinase AURKA/Aurora A during mitotic progression by promoting AURKA removal from centrosomes in prophase. Also, regulates spindle orientation during mitosis. The polypeptide is UBX domain-containing protein 2B (Ubxn2b) (Rattus norvegicus (Rat)).